The primary structure comprises 517 residues: MTCPDKPGQLVNWFVCSLCAPRVCKLWSSRRPRTRRNLLLGTACAIYLGFLVSQVGRGSFQHGQATDRGPPNGHDIFKVPFSEIPLDGTLAPPELQGNGSTLQPNVVYITLRSKRSKPANIRGTVKPKRRKKYAVASAAPDQEVLVRPSLIQQEAARAADAEVPGYVQGYLTKVGERPWRVLRGPGVRTRGSNLQQPRARESNIRIYSESAPSWLSKEDIRRMRLLADSEVASILPISKSGTRLLVLEGSTSGSVPGCGPSPCGLLKQPLDMSEVFAFHLDRILGLNRTLPSVSRKLEFIQDGRPRPIILWDSSLASASNDSHSSVKITWGTYQRLLKQKCWLNGRVPRPEWDCTEIHHHEWSKMALFDFLLQIYNRLDTNCCGFRPRKEDACIQNGLRSNCEDQTSVTLAHIIQRKNDPRHLVFINNKGFFDRSEDNLNFKLLEGIREFPESAVSVLKSQHLRQKLLQSLFLDQVYWESQGGRQGIEKLIDVIERRARILITYINAHGARVLPMNE.

Topologically, residues methionine 1–arginine 36 are cytoplasmic. The chain crosses the membrane as a helical; Signal-anchor for type II membrane protein span at residues asparagine 37 to glycine 56. Over arginine 57–glutamate 517 the chain is Extracellular. Residues asparagine 98 and asparagine 287 are each glycosylated (N-linked (GlcNAc...) asparagine).

Belongs to the GASK family.

It is found in the golgi apparatus membrane. This chain is Golgi-associated kinase 1B, found in Mus musculus (Mouse).